The primary structure comprises 288 residues: Phytanoyl-CoA dioxygenase domain-containing protein 1 homolog (288 aa).

2-oxoglutarate-binding positions include lysine 95, methionine 134, histidine 149 to aspartate 151, and tryptophan 167. 2 residues coordinate Fe cation: histidine 149 and aspartate 151. Position 242 (histidine 242) interacts with Fe cation. Residues serine 244 and arginine 253 each coordinate 2-oxoglutarate.

It belongs to the PhyH family. PHYHD1 subfamily. Fe cation serves as cofactor.

Has alpha-ketoglutarate-dependent dioxygenase activity. Does not show detectable activity towards fatty acid CoA thioesters. Is not expected to be active with phytanoyl CoA. The chain is Phytanoyl-CoA dioxygenase domain-containing protein 1 homolog from Caenorhabditis briggsae.